Consider the following 309-residue polypeptide: tRNA-cytidine(32) 2-sulfurtransferase (309 aa).

Positions 47 to 52 match the PP-loop motif motif; sequence SGGKDS. [4Fe-4S] cluster contacts are provided by C122, C125, and C213.

The protein belongs to the TtcA family. Homodimer. Mg(2+) serves as cofactor. The cofactor is [4Fe-4S] cluster.

It localises to the cytoplasm. The enzyme catalyses cytidine(32) in tRNA + S-sulfanyl-L-cysteinyl-[cysteine desulfurase] + AH2 + ATP = 2-thiocytidine(32) in tRNA + L-cysteinyl-[cysteine desulfurase] + A + AMP + diphosphate + H(+). It functions in the pathway tRNA modification. Functionally, catalyzes the ATP-dependent 2-thiolation of cytidine in position 32 of tRNA, to form 2-thiocytidine (s(2)C32). The sulfur atoms are provided by the cysteine/cysteine desulfurase (IscS) system. This is tRNA-cytidine(32) 2-sulfurtransferase from Erwinia tasmaniensis (strain DSM 17950 / CFBP 7177 / CIP 109463 / NCPPB 4357 / Et1/99).